Consider the following 219-residue polypeptide: UPF0319 protein MS0844 (219 aa).

An N-terminal signal peptide occupies residues 1–21 (MKFRLTALAVAALLTSTASFA).

This sequence belongs to the UPF0319 family.

In Mannheimia succiniciproducens (strain KCTC 0769BP / MBEL55E), this protein is UPF0319 protein MS0844.